We begin with the raw amino-acid sequence, 351 residues long: MRKIIHVDMDCFFAAVEMRDNPALRDIPIAIGGSRERRGVISTANYPARKFGVRSAMPTGMALKLCPHLTLLPGRFDAYKEASNHIREIFSRYTSRIEPLSLDEAYLDVTDSVHCHGSATLIAQEIRQTIFNELQLTASAGVAPVKFLAKIASDMNKPNGQFVITPAEVPAFLQTLPLAKIPGVGKVSAAKLEAMGLRTCGDVQKCDLVILLKRFGKFGRILWERSQGIDERDVNSERLRKSVGVERTMAEDIHHWSECEAIIERLYPELERRLAKVKPDLLIARQGVKLKFDDFQQTTQEHVWPRLNKADLIATARKTWDERRGGRGVRLVGLHVTLLDPQMERQLVLGL.

Residues 4 to 185 form the UmuC domain; that stretch reads IIHVDMDCFF…LPLAKIPGVG (182 aa). The Mg(2+) site is built by Asp8 and Asp103. The active site involves Glu104.

Belongs to the DNA polymerase type-Y family. In terms of assembly, monomer. It depends on Mg(2+) as a cofactor.

It is found in the cytoplasm. The catalysed reaction is DNA(n) + a 2'-deoxyribonucleoside 5'-triphosphate = DNA(n+1) + diphosphate. In terms of biological role, poorly processive, error-prone DNA polymerase involved in untargeted mutagenesis. Copies undamaged DNA at stalled replication forks, which arise in vivo from mismatched or misaligned primer ends. These misaligned primers can be extended by PolIV. Exhibits no 3'-5' exonuclease (proofreading) activity. May be involved in translesional synthesis, in conjunction with the beta clamp from PolIII. The protein is DNA polymerase IV (dinB) of Escherichia coli O6:H1 (strain CFT073 / ATCC 700928 / UPEC).